Reading from the N-terminus, the 342-residue chain is S-adenosyl-L-methionine-dependent tRNA 4-demethylwyosine synthase (342 aa).

[4Fe-4S] cluster-binding residues include Cys45, Cys58, Cys71, Cys81, Cys85, and Cys88. The region spanning 64–312 is the Radical SAM core domain; the sequence is YGIHSHRCLQ…VKHLPGYHIE (249 aa).

Belongs to the TYW1 family. As to quaternary structure, monomer. Requires [4Fe-4S] cluster as cofactor.

Its subcellular location is the cytoplasm. It carries out the reaction N(1)-methylguanosine(37) in tRNA(Phe) + pyruvate + S-adenosyl-L-methionine = 4-demethylwyosine(37) in tRNA(Phe) + 5'-deoxyadenosine + L-methionine + CO2 + H2O. In terms of biological role, component of the wyosine derivatives biosynthesis pathway that catalyzes the condensation of N-methylguanine with 2 carbon atoms from pyruvate to form the tricyclic 4-demethylwyosine (imG-14) on guanosine-37 of tRNA(Phe). In Pyrococcus abyssi (strain GE5 / Orsay), this protein is S-adenosyl-L-methionine-dependent tRNA 4-demethylwyosine synthase.